A 453-amino-acid chain; its full sequence is tRNA-2-methylthio-N(6)-dimethylallyladenosine synthase (453 aa).

The MTTase N-terminal domain maps to 7 to 123 (GTYWITTFGC…LDTLLSQVEA (117 aa)). Positions 16, 52, 86, 158, 162, and 165 each coordinate [4Fe-4S] cluster. In terms of domain architecture, Radical SAM core spans 144–381 (RDSSLCAWVN…NALVERKAKA (238 aa)). The 64-residue stretch at 384–447 (QRYLGRVEEV…AFSLSGSAQA (64 aa)) folds into the TRAM domain.

Belongs to the methylthiotransferase family. MiaB subfamily. In terms of assembly, monomer. [4Fe-4S] cluster is required as a cofactor.

The protein resides in the cytoplasm. It catalyses the reaction N(6)-dimethylallyladenosine(37) in tRNA + (sulfur carrier)-SH + AH2 + 2 S-adenosyl-L-methionine = 2-methylsulfanyl-N(6)-dimethylallyladenosine(37) in tRNA + (sulfur carrier)-H + 5'-deoxyadenosine + L-methionine + A + S-adenosyl-L-homocysteine + 2 H(+). Functionally, catalyzes the methylthiolation of N6-(dimethylallyl)adenosine (i(6)A), leading to the formation of 2-methylthio-N6-(dimethylallyl)adenosine (ms(2)i(6)A) at position 37 in tRNAs that read codons beginning with uridine. The sequence is that of tRNA-2-methylthio-N(6)-dimethylallyladenosine synthase from Synechococcus sp. (strain RCC307).